A 291-amino-acid chain; its full sequence is D-alanyl-D-alanine carboxypeptidase DacB2 (291 aa).

An N-terminal signal peptide occupies residues 1–22; sequence MRKLMTATAALCACAVTVSAGA. Ser69 functions as the Acyl-ester intermediate in the catalytic mechanism. Lys72 acts as the Proton acceptor in catalysis. The active site involves Ser124.

This sequence belongs to the peptidase S11 family.

Its subcellular location is the periplasm. The protein operates within cell wall biogenesis; peptidoglycan biosynthesis. With respect to regulation, inhibited by the beta-lactam antibiotic meropenem. Inhibited by the non-specific inhibitor phenylmethylsulfonyl fluoride (PMSF). In terms of biological role, probably cleaves the terminal D-Ala-D-Ala dipeptide of the peptidoglycan stem peptide. Shows significant D,D-carboxypeptidase activity in vitro. Acts on the synthetic penta-peptide substrate Penta-DAP (L-Ala-gamma-D-Gln-DAP-D-Ala-D-Ala). Also shows weak activity on Penta-Lys (L-Ala-gamma-Glu-L-Lys-D-Ala-D-Ala). The catalytic domain binds weakly to peptidoglycan in vitro. Plays an important role in the maintenance of colony morphology and cell wall permeability and integrity. This is D-alanyl-D-alanine carboxypeptidase DacB2 from Mycobacterium tuberculosis (strain ATCC 25618 / H37Rv).